Reading from the N-terminus, the 496-residue chain is L-arabinose isomerase (496 aa).

Positions 306, 331, 348, and 447 each coordinate Mn(2+).

Belongs to the arabinose isomerase family. Requires Mn(2+) as cofactor.

It catalyses the reaction beta-L-arabinopyranose = L-ribulose. The protein operates within carbohydrate degradation; L-arabinose degradation via L-ribulose; D-xylulose 5-phosphate from L-arabinose (bacterial route): step 1/3. Catalyzes the conversion of L-arabinose to L-ribulose. The protein is L-arabinose isomerase of Geobacillus thermodenitrificans (strain NG80-2).